Consider the following 607-residue polypeptide: Glutamine--fructose-6-phosphate aminotransferase [isomerizing] (607 aa).

The active-site Nucleophile; for GATase activity is the Cys2. Positions 2–217 (CGIVGIVGHS…DGDWAVVRRD (216 aa)) constitute a Glutamine amidotransferase type-2 domain. 2 SIS domains span residues 283–422 (LPFD…ARGV) and 455–597 (IARE…VDQP). Lys602 acts as the For Fru-6P isomerization activity in catalysis.

As to quaternary structure, homodimer.

The protein localises to the cytoplasm. The enzyme catalyses D-fructose 6-phosphate + L-glutamine = D-glucosamine 6-phosphate + L-glutamate. Functionally, catalyzes the first step in hexosamine metabolism, converting fructose-6P into glucosamine-6P using glutamine as a nitrogen source. This is Glutamine--fructose-6-phosphate aminotransferase [isomerizing] from Mesorhizobium japonicum (strain LMG 29417 / CECT 9101 / MAFF 303099) (Mesorhizobium loti (strain MAFF 303099)).